A 66-amino-acid chain; its full sequence is MKTSALFVIFGLVLLFCNSFAAELKTTGRGCGGLMAGCDGKSTFCCSGYNCSPTWKWCVYARPGRR.

The first 21 residues, 1–21, serve as a signal peptide directing secretion; the sequence is MKTSALFVIFGLVLLFCNSFA. Positions 22–29 are excised as a propeptide; sequence AELKTTGR. Cystine bridges form between Cys-31/Cys-46, Cys-38/Cys-51, and Cys-45/Cys-58. Pro-63 carries the post-translational modification Proline amide.

This sequence belongs to the neurotoxin 10 (Hwtx-1) family. 46 (Jztx-7/10/12) subfamily. Expressed by the venom gland.

It is found in the secreted. Probable ion channel inhibitor. This chain is U1-theraphotoxin-Cg1a 1, found in Chilobrachys guangxiensis (Chinese earth tiger tarantula).